A 254-amino-acid polypeptide reads, in one-letter code: Large ribosomal subunit protein uL2 (254 aa).

The protein belongs to the universal ribosomal protein uL2 family. In terms of assembly, component of the large ribosomal subunit. Mature ribosomes consist of a small (40S) and a large (60S) subunit. The 40S subunit contains about 32 different proteins and 1 molecule of RNA (18S). The 60S subunit contains 45 different proteins and 3 molecules of RNA (25S, 5.8S and 5S).

The protein resides in the cytoplasm. Functionally, component of the ribosome, a large ribonucleoprotein complex responsible for the synthesis of proteins in the cell. The small ribosomal subunit (SSU) binds messenger RNAs (mRNAs) and translates the encoded message by selecting cognate aminoacyl-transfer RNA (tRNA) molecules. The large subunit (LSU) contains the ribosomal catalytic site termed the peptidyl transferase center (PTC), which catalyzes the formation of peptide bonds, thereby polymerizing the amino acids delivered by tRNAs into a polypeptide chain. The nascent polypeptides leave the ribosome through a tunnel in the LSU and interact with protein factors that function in enzymatic processing, targeting, and the membrane insertion of nascent chains at the exit of the ribosomal tunnel. The polypeptide is Large ribosomal subunit protein uL2 (Candida albicans (strain SC5314 / ATCC MYA-2876) (Yeast)).